The chain runs to 260 residues: Hemin import ATP-binding protein HmuV (260 aa).

One can recognise an ABC transporter domain in the interval 3–239; that stretch reads LHAQQISLSI…QRLSEVYGCD (237 aa). 35–42 serves as a coordination point for ATP; the sequence is GPNGSGKS.

Belongs to the ABC transporter superfamily. Heme (hemin) importer (TC 3.A.1.14.5) family. The complex is composed of two ATP-binding proteins (HmuV), two transmembrane proteins (HmuU) and a solute-binding protein (HmuT).

The protein localises to the cell inner membrane. Functionally, part of the ABC transporter complex HmuTUV involved in hemin import. Responsible for energy coupling to the transport system. This chain is Hemin import ATP-binding protein HmuV, found in Ruegeria sp. (strain TM1040) (Silicibacter sp.).